A 400-amino-acid chain; its full sequence is Nicotinate phosphoribosyltransferase (400 aa).

His-220 carries the phosphohistidine; by autocatalysis modification.

Belongs to the NAPRTase family. In terms of processing, transiently phosphorylated on a His residue during the reaction cycle. Phosphorylation strongly increases the affinity for substrates and increases the rate of nicotinate D-ribonucleotide production. Dephosphorylation regenerates the low-affinity form of the enzyme, leading to product release.

The enzyme catalyses nicotinate + 5-phospho-alpha-D-ribose 1-diphosphate + ATP + H2O = nicotinate beta-D-ribonucleotide + ADP + phosphate + diphosphate. Its pathway is cofactor biosynthesis; NAD(+) biosynthesis; nicotinate D-ribonucleotide from nicotinate: step 1/1. Catalyzes the synthesis of beta-nicotinate D-ribonucleotide from nicotinate and 5-phospho-D-ribose 1-phosphate at the expense of ATP. The chain is Nicotinate phosphoribosyltransferase from Escherichia coli O17:K52:H18 (strain UMN026 / ExPEC).